Consider the following 340-residue polypeptide: Protein RecA (340 aa).

An ATP-binding site is contributed by 66 to 73; it reads GPESSGKT.

This sequence belongs to the RecA family.

Its subcellular location is the cytoplasm. In terms of biological role, can catalyze the hydrolysis of ATP in the presence of single-stranded DNA, the ATP-dependent uptake of single-stranded DNA by duplex DNA, and the ATP-dependent hybridization of homologous single-stranded DNAs. It interacts with LexA causing its activation and leading to its autocatalytic cleavage. In Rickettsia prowazekii (strain Madrid E), this protein is Protein RecA.